Reading from the N-terminus, the 513-residue chain is Maturase K (513 aa).

The protein belongs to the intron maturase 2 family. MatK subfamily.

Its subcellular location is the plastid. It is found in the chloroplast. Its function is as follows. Usually encoded in the trnK tRNA gene intron. Probably assists in splicing its own and other chloroplast group II introns. The protein is Maturase K of Typha angustifolia (Narrow leaf cattail).